A 690-amino-acid chain; its full sequence is NF-kappa-B-repressing factor (690 aa).

The segment at Met1–Val296 is active repression domain. A Nuclear localization signal motif is present at residues Lys25 to Lys45. 3 disordered regions span residues Ser27–Ser49, Ser65–Gly85, and Tyr133–Gln160. Lys68 is covalently cross-linked (Glycyl lysine isopeptide (Lys-Gly) (interchain with G-Cter in SUMO2)). Polar residues predominate over residues Pro139 to Cys150. Residues Val296–Ala388 mediate DNA binding. Polar residues predominate over residues Pro414 to His425. The tract at residues Pro414–Lys436 is disordered. Lys500 participates in a covalent cross-link: Glycyl lysine isopeptide (Lys-Gly) (interchain with G-Cter in SUMO2). Residues Glu551–Glu596 enclose the G-patch domain. An R3H domain is found at Lys600–Arg664. A Phosphoserine modification is found at Ser618. Residues Lys666 and Lys674 each participate in a glycyl lysine isopeptide (Lys-Gly) (interchain with G-Cter in SUMO2) cross-link.

Interacts with NF-kappa-B. Interacts with XRN2. Interacts (via G-patch domain) with DHX15; promoting the RNA helicase activity of DHX15.

The protein resides in the nucleus. It localises to the nucleolus. Functionally, enhances the ATPase activity of DHX15 by acting like a brace that tethers mobile sections of DHX15 together, stabilizing a functional conformation with high RNA affinity of DHX15. Involved in the constitutive silencing of the interferon beta promoter, independently of the virus-induced signals, and in the inhibition of the basal and cytokine-induced iNOS promoter activity. Also involved in the regulation of IL-8 transcription. May also act as a DNA-binding transcription regulator: interacts with a specific negative regulatory element (NRE) 5'-AATTCCTCTGA-3' to mediate transcriptional repression of certain NK-kappa-B responsive genes. The sequence is that of NF-kappa-B-repressing factor (Nkrf) from Mus musculus (Mouse).